Consider the following 282-residue polypeptide: ATP synthase subunit a (282 aa).

6 helical membrane-spanning segments follow: residues 38-58 (VDSMFYSVLLGLLTVFLLWLA), 97-117 (FVAPLALTVFVWIFLMNAMDM), 145-165 (VVPTADLSATLGMSCGVLLLC), 187-207 (FGSHPLLYPINFAMQIIEFVA), 225-247 (LIFILIALLGSTATVFGFVGHIV), and 261-281 (TLQAFIFMMLTLVYIGQAHEG).

Belongs to the ATPase A chain family. In terms of assembly, F-type ATPases have 2 components, CF(1) - the catalytic core - and CF(0) - the membrane proton channel. CF(1) has five subunits: alpha(3), beta(3), gamma(1), delta(1), epsilon(1). CF(0) has three main subunits: a(1), b(2) and c(9-12). The alpha and beta chains form an alternating ring which encloses part of the gamma chain. CF(1) is attached to CF(0) by a central stalk formed by the gamma and epsilon chains, while a peripheral stalk is formed by the delta and b chains.

It is found in the cell inner membrane. Its function is as follows. Key component of the proton channel; it plays a direct role in the translocation of protons across the membrane. In Azoarcus sp. (strain BH72), this protein is ATP synthase subunit a.